We begin with the raw amino-acid sequence, 195 residues long: Peptidyl-tRNA hydrolase (195 aa).

A tRNA-binding site is contributed by Tyr-14. The active-site Proton acceptor is the His-19. TRNA-binding residues include Tyr-64 and Asn-66.

Belongs to the PTH family. Monomer.

It is found in the cytoplasm. It catalyses the reaction an N-acyl-L-alpha-aminoacyl-tRNA + H2O = an N-acyl-L-amino acid + a tRNA + H(+). Functionally, hydrolyzes ribosome-free peptidyl-tRNAs (with 1 or more amino acids incorporated), which drop off the ribosome during protein synthesis, or as a result of ribosome stalling. In terms of biological role, catalyzes the release of premature peptidyl moieties from peptidyl-tRNA molecules trapped in stalled 50S ribosomal subunits, and thus maintains levels of free tRNAs and 50S ribosomes. The protein is Peptidyl-tRNA hydrolase of Desulforudis audaxviator (strain MP104C).